Consider the following 1248-residue polypeptide: Cullin-associated NEDD8-dissociated protein 1 (1248 aa).

HEAT repeat units follow at residues 44-82, 127-165, 168-206, 365-403, 425-463, 510-548, 604-642, 644-682, 861-900, 976-1014, and 1054-1093; these read DESE…KVKE, PNVC…RFGE, VPFH…QANS, EDFY…NTRL, IEQL…SLPG, HPHI…VIRP, QNEL…LRID, TPIL…NYSS, DLSS…GSLQ, LVNP…DQPQ, and PSLV…TVDD.

It belongs to the CAND family.

In terms of biological role, key assembly factor of SCF (SKP1-CUL1-F-box protein) E3 ubiquitin ligase complexes that promotes the exchange of the substrate-recognition F-box subunit in SCF complexes, thereby playing a key role in the cellular repertoire of SCF complexes. Acts as a F-box protein exchange factor. Probably plays a similar role in other cullin-RING E3 ubiquitin ligase complexes. In Drosophila melanogaster (Fruit fly), this protein is Cullin-associated NEDD8-dissociated protein 1 (Cand1).